A 1366-amino-acid polypeptide reads, in one-letter code: MLSFVDTRTLLLLAVTLCLATCQSLQEETVRKGPAGDRGPRGERGPPGPPGRDGEDGPTGPPGPPGPPGPPGLGGNFAAQYDGKGVGLGPGPMGLMGPRGPPGAAGAPGPQGFQGPAGEPGEPGQTGPAGARGPAGPPGKAGEDGHPGKPGRPGERGVVGPQGARGFPGTPGLPGFKGIRGHNGLDGLKGQPGAPGVKGEPGAPGENGTPGQTGARGLPGERGRVGAPGPAGARGSDGSVGPVGPAGPIGSAGPPGFPGAPGPKGEIGAVGNAGPAGPAGPRGEVGLPGLSGPVGPPGNPGANGLTGAKGAAGLPGVAGAPGLPGPRGIPGPVGAAGATGARGLVGEPGPAGSKGESGNKGEPGSAGPQGPPGPSGEEGKRGPNGEAGSAGPPGPPGLRGSPGSRGLPGADGRAGVMGPPGSRGASGPAGVRGPNGDAGRPGEPGLMGPRGLPGSPGNIGPAGKEGPVGLPGIDGRPGPIGPAGARGEPGNIGFPGPKGPTGDPGKNGDKGHAGLAGARGAPGPDGNNGAQGPPGPQGVQGGKGEQGPPGPPGFQGLPGPSGPAGEVGKPGERGLHGEFGLPGPAGPRGERGPPGESGAAGPTGPIGSRGPSGPPGPDGNKGEPGVVGAVGTAGPSGPSGLPGERGAAGIPGGKGEKGEPGLRGEIGNPGRDGARGAPGAVGAPGPAGATGDRGEAGAAGPAGPAGPRGSPGERGEVGPAGPNGFAGPAGAAGQPGAKGERGAKGPKGENGVVGPTGPVGAAGPAGPNGPPGPAGSRGDGGPPGMTGFPGAAGRTGPPGPSGISGPPGPPGPAGKEGLRGPRGDQGPVGRTGEVGAVGPPGFAGEKGPSGEAGTAGPPGTPGPQGLLGAPGILGLPGSRGERGLPGVAGAVGEPGPLGIAGPPGARGPPGAVGSPGVNGAPGEAGRDGNPGNDGPPGRDGQPGHKGERGYPGNIGPVGAAGAPGPHGPVGPAGKHGNRGETGPSGPVGPAGAVGPRGPSGPQGIRGDKGEPGEKGPRGLPGLKGHNGLQGLPGIAGHHGDQGAPGSVGPAGPRGPAGPSGPAGKDGRTGHPGTVGPAGIRGPQGHQGPAGPPGPPGPPGPPGVSGGGYDFGYDGDFYRADQPRSAPSLRPKDYEVDATLKSLNNQIETLLTPEGSRKNPARTCRDLRLSHPEWSSGYYWIDPNQGCTMDAIKVYCDFSTGETCIRAQPENIPAKNWYRSSKDKKHVWLGETINAGSQFEYNVEGVTSKEMATQLAFMRLLANYASQNITYHCKNSIAYMDEETGNLKKAVILQGSNDVELVAEGNSRFTYTVLVDGCSKKTNEWGKTIIEYKTNKPSRLPFLDIAPLDIGGADQEFFVDIGPVCFK.

An N-terminal signal peptide occupies residues 1-22 (MLSFVDTRTLLLLAVTLCLATC). Pyrrolidone carboxylic acid is present on Gln23. Positions 23–79 (QSLQEETVRKGPAGDRGPRGERGPPGPPGRDGEDGPTGPPGPPGPPGPPGLGGNFAA) are cleaved as a propeptide — N-terminal propeptide. A compositionally biased stretch (basic and acidic residues) spans 28–44 (ETVRKGPAGDRGPRGER). Residues 28 to 1130 (ETVRKGPAGD…QPRSAPSLRP (1103 aa)) form a disordered region. Pro47, Pro50, Pro62, Pro65, Pro68, and Pro71 each carry 4-hydroxyproline. Residues 59–71 (TGPPGPPGPPGPP) show a composition bias toward pro residues. Gln80 is subject to Pyrrolidone carboxylic acid. Allysine is present on Lys84. A compositionally biased stretch (gly residues) spans 84-94 (KGVGLGPGPMG). Residues 95-140 (LMGPRGPPGAAGAPGPQGFQGPAGEPGEPGQTGPAGARGPAGPPGK) show a composition bias toward low complexity. Pro102 and Pro108 each carry 4-hydroxyproline. Basic and acidic residues predominate over residues 141-155 (AGEDGHPGKPGRPGE). At Lys177 the chain carries 5-hydroxylysine; alternate. An O-linked (Gal...) hydroxylysine; alternate glycan is attached at Lys177. 6 stretches are compositionally biased toward low complexity: residues 225 to 254 (VGAP…SAGP), 269 to 293 (AVGN…LSGP), 300 to 321 (PGAN…AGAP), 330 to 345 (PGPV…RGLV), 398 to 410 (LRGS…LPGA), and 419 to 434 (PPGS…VRGP). 4-hydroxyproline is present on residues Pro420, Pro441, and Pro444. Low complexity-rich tracts occupy residues 470–489 (LPGI…RGEP) and 513–531 (AGLA…NGAQ). A compositionally biased stretch (gly residues) spans 538–547 (GVQGGKGEQG). 4 stretches are compositionally biased toward low complexity: residues 594–611 (PGES…SRGP), 623–648 (EPGV…RGAA), 663–710 (RGEI…PRGS), and 717–737 (VGPA…QPGA). Residues 738 to 747 (KGERGAKGPK) are compositionally biased toward basic and acidic residues. A compositionally biased stretch (low complexity) spans 752 to 765 (VVGPTGPVGAAGPA). Residues 775 to 784 (GSRGDGGPPG) show a composition bias toward gly residues. Composition is skewed to low complexity over residues 786–795 (TGFPGAAGRT), 849–876 (SGEA…LGLP), 884–932 (LPGV…NPGN), 956–974 (PVGA…PAGK), and 983–1001 (PSGP…PSGP). Residues 1005 to 1016 (RGDKGEPGEKGP) show a composition bias toward basic and acidic residues. Over residues 1089-1101 (AGPPGPPGPPGPP) the composition is skewed to pro residues. Residues 1120-1366 (DQPRSAPSLR…FVDIGPVCFK (247 aa)) constitute a propeptide, C-terminal propeptide. The 234-residue stretch at 1133 to 1366 (YEVDATLKSL…FVDIGPVCFK (234 aa)) folds into the Fibrillar collagen NC1 domain. Disulfide bonds link Cys1163/Cys1195, Cys1203/Cys1364, and Cys1272/Cys1317. The Ca(2+) site is built by Asp1181, Asn1183, Gln1184, Cys1186, and Asp1189. Asn1267 is a glycosylation site (N-linked (GlcNAc...) asparagine).

Belongs to the fibrillar collagen family. Trimers of one alpha 2(I) and two alpha 1(I) chains. Interacts (via C-terminus) with TMEM131 (via PapD-L domain); the interaction is direct and is involved in assembly and TRAPPIII ER-to-Golgi transport complex-dependent secretion of collagen. Post-translationally, prolines at the third position of the tripeptide repeating unit (G-X-Y) are hydroxylated in some or all of the chains. Forms the fibrils of tendon, ligaments and bones. In bones the fibrils are mineralized with calcium hydroxyapatite.

It localises to the secreted. The protein localises to the extracellular space. The protein resides in the extracellular matrix. In terms of biological role, type I collagen is a member of group I collagen (fibrillar forming collagen). The protein is Collagen alpha-2(I) chain (COL1A2) of Homo sapiens (Human).